A 197-amino-acid polypeptide reads, in one-letter code: Ribonuclease HII (197 aa).

An RNase H type-2 domain is found at 11-197; that stretch reads NLIAGVDEVG…FAPVRKILGL (187 aa). A divalent metal cation is bound by residues D17, E18, and D109.

It belongs to the RNase HII family. Mn(2+) serves as cofactor. The cofactor is Mg(2+).

The protein resides in the cytoplasm. The enzyme catalyses Endonucleolytic cleavage to 5'-phosphomonoester.. Functionally, endonuclease that specifically degrades the RNA of RNA-DNA hybrids. This Haemophilus ducreyi (strain 35000HP / ATCC 700724) protein is Ribonuclease HII.